The following is a 205-amino-acid chain: Probable GTP-binding protein EngB (205 aa).

The EngB-type G domain occupies 27–201 (TGIEIAFAGR…AVKLDFWFSP (175 aa)). GTP contacts are provided by residues 35–42 (GRSNAGKS), 62–66 (GRTQL), 80–83 (DLPG), 147–150 (TKAD), and 180–182 (FSA). Mg(2+)-binding residues include Ser-42 and Thr-64.

It belongs to the TRAFAC class TrmE-Era-EngA-EngB-Septin-like GTPase superfamily. EngB GTPase family. Requires Mg(2+) as cofactor.

Necessary for normal cell division and for the maintenance of normal septation. The polypeptide is Probable GTP-binding protein EngB (Haemophilus influenzae (strain PittGG)).